Reading from the N-terminus, the 361-residue chain is MSKQQPTQFINPETPGYVGFANLPNQVHRKSVKKGFEFTLMVVGESGLGKSTLINSLFLTDLYPERIIPGAAEKIERTVQIEASTVEIEERGVKLRLTVVDTPGYGDAINSRDCFKTIISYIDEQFERYLHDESGLNRRHIIDNRVHCCFYFISPFGHGLKPLDVAFMKAIHNKVNIVPVIAKADTLTLKERERLKKRILDEIEEHSIKIYHLPDAESDEDEDFKEQTRLLKASIPFSVVGSNQLIEAKGKKVRGRLYPWGVVEVENPEHNDFLKLRTMLITHMQDLQEVTQDLHYENFRSERLKRGGRKVENEDMNKDQILLEKEAELRRMQEMIARMQAQMQMQMQGGDTDSSTLGHHV.

The residue at position 17 (Tyr17) is a Phosphotyrosine. The Septin-type G domain maps to 34-306 (KGFEFTLMVV…ENFRSERLKR (273 aa)). Residues 44 to 51 (GESGLGKS) form a G1 motif region. GTP-binding positions include 44-51 (GESGLGKS), Thr78, Gly104, and 183-191 (KADTLTLKE). The G3 motif stretch occupies residues 101–104 (DTPG). Residues 182 to 185 (AKAD) form a G4 motif region. An N6-acetyllysine modification is found at Lys190. Tyr211 carries the post-translational modification Phosphotyrosine. Residue Ser218 is modified to Phosphoserine. GTP is bound by residues Gly241 and Arg256. The important for dimerization stretch occupies residues 260–270 (WGVVEVENPEH).

This sequence belongs to the TRAFAC class TrmE-Era-EngA-EngB-Septin-like GTPase superfamily. Septin GTPase family. Septins polymerize into heterooligomeric protein complexes that form filaments, and associate with cellular membranes, actin filaments and microtubules. GTPase activity is required for filament formation. Septin filaments are assembled from asymmetrical heterotrimers, composed of SEPTIN2, SEPTIN6 and SEPTIN7 that associate head-to-head to form a hexameric unit. Interaction between SEPTIN2 and SEPTIN7 seems indirect. Also interacts with SEPTIN9 and SEPTIN5. Interaction with SEPTIN4 not detected. Component of a septin core octameric complex consisting of SEPTIN12, SEPTIN7, SEPTIN6 and SEPTIN2 or SEPTIN4 in the order 12-7-6-2-2-6-7-12 or 12-7-6-4-4-6-7-12 and located in the sperm annulus. Interacts with MAP4. Interacts with DZIP1L.

The protein localises to the cytoplasm. It localises to the cytoskeleton. Its subcellular location is the spindle. The protein resides in the cleavage furrow. It is found in the midbody. The protein localises to the cell cortex. It localises to the cell projection. Its subcellular location is the cilium membrane. The protein resides in the cilium. It is found in the flagellum. Filament-forming cytoskeletal GTPase. Forms a filamentous structure with SEPTIN12, SEPTIN6, SEPTIN2 and probably SEPTIN4 at the sperm annulus which is required for the structural integrity and motility of the sperm tail during postmeiotic differentiation. Required for normal organization of the actin cytoskeleton. Plays a role in the biogenesis of polarized columnar-shaped epithelium by maintaining polyglutamylated microtubules, thus facilitating efficient vesicle transport, and by impeding MAP4 binding to tubulin. Required for the progression through mitosis. Forms a scaffold at the midplane of the mitotic splindle required to maintain CENPE localization at kinetochores and consequently chromosome congression. During anaphase, may be required for chromosome segregation and spindle elongation. Plays a role in ciliogenesis and collective cell movements. In cilia, required for the integrity of the diffusion barrier at the base of the primary cilium that prevents diffusion of transmembrane proteins between the cilia and plasma membranes: probably acts by regulating the assembly of the tectonic-like complex (also named B9 complex) by localizing TMEM231 protein. The sequence is that of Septin-2 from Rattus norvegicus (Rat).